The following is a 589-amino-acid chain: Complement component C8 beta chain (589 aa).

The first 31 residues, 1-31 (MKIGAQVWRALAKSCLLCATLGCLHFPGSRG), serve as a signal peptide directing secretion. Positions 32 to 53 (GKPDFFETKAVNGSLVKSRPVR) are excised as a propeptide. A glycan (N-linked (GlcNAc...) asparagine) is linked at Asn43. The 54-residue stretch at 63-116 (DCELSTWSSWTACDPCQKKRYRHTYLLRPSQFYGELCDLSDKEVEDCVTNQPCR) folds into the TSP type-1 1 domain. 7 cysteine pairs are disulfide-bonded: Cys64/Cys99, Cys75/Cys109, Cys78/Cys115, Cys121/Cys132, Cys126/Cys145, Cys139/Cys154, and Cys161/Cys199. C-linked (Man) tryptophan glycosylation is found at Trp69 and Trp72. The region spanning 120–155 (RCEGFVCAQTGRCVNRRLLCNGDNDCGDQSDEANCR) is the LDL-receptor class A domain. Residues Leu137, Asn140, Asp142, Asp144, Asp150, and Glu151 each contribute to the Ca(2+) site. The MACPF domain maps to 157 to 503 (IYKNCQREME…EFQSEVSSCR (347 aa)). The next 8 beta stranded transmembrane spans lie at 201–206 (PHYILD), 209–213 (FRKPY), 251–258 (FNFTSGFK), 261–268 (GVMDLGIK), 328–335 (SYGEYRDL), 338–343 (DFGTHF), 378–385 (AGGSFGIG), and 391–398 (VYVKVGVS). Cys377 and Cys402 form a disulfide bridge. One can recognise an EGF-like domain in the interval 404 to 534 (DIMKEINERN…PGGFQGTACE (131 aa)). At Thr417 the chain carries Phosphothreonine. Disulfide bonds link Cys502-Cys549, Cys504-Cys520, Cys507-Cys522, and Cys524-Cys533. Positions 544 to 587 (DGKWSCWSDWSACSGGHKTRHRQCNNPAPHKGGSPCSGPASETL) constitute a TSP type-1 2 domain. C-linked (Man) tryptophan glycosylation is found at Trp550 and Trp553. Cys556 and Cys589 are oxidised to a cystine. Residues 570 to 589 (PAPHKGGSPCSGPASETLNC) are disordered.

This sequence belongs to the complement C6/C7/C8/C9 family. Heterotrimer of 3 chains: alpha (C8A), beta (C8B) and gamma (C8G); the alpha and gamma chains are disulfide bonded. Component of the membrane attack complex (MAC), composed of complement C5b, C6, C7, C8A, C8B, C8G and multiple copies of the pore-forming subunit C9. N-glycosylated; contains one or two bound glycans. Not O-glycosylated.

It is found in the secreted. It localises to the target cell membrane. Membrane attack complex (MAC) assembly is inhibited by CD59, thereby protecting self-cells from damage during complement activation. CD59 acts by binding to the beta-haipins of C8 (C8A and C8B), forming an intermolecular beta-sheet that prevents incorporation of the multiple copies of C9 required for complete formation of the osmolytic pore. MAC assembly is also inhibited by clusterin (CLU) chaperones that inhibit polymerization of C9. Its function is as follows. Component of the membrane attack complex (MAC), a multiprotein complex activated by the complement cascade, which inserts into a target cell membrane and forms a pore, leading to target cell membrane rupture and cell lysis. The MAC is initiated by proteolytic cleavage of C5 into complement C5b in response to the classical, alternative, lectin and GZMK complement pathways. The complement pathways consist in a cascade of proteins that leads to phagocytosis and breakdown of pathogens and signaling that strengthens the adaptive immune system. C8B, together with C8A and C8G, inserts into the target membrane, but does not form pores by itself. During MAC assembly, associates with C5b, C6 and C7 to form the C5b8 intermediate complex that inserts into the target membrane and traverses the bilayer increasing membrane rigidity. This is Complement component C8 beta chain (C8b) from Mus musculus (Mouse).